The primary structure comprises 287 residues: Inhibitory synaptic factor 1 (287 aa).

The disordered stretch occupies residues methionine 1–arginine 22. Positions methionine 25–serine 58 form a coiled coil. Disordered regions lie at residues arginine 113 to glutamate 174 and cysteine 189 to leucine 287. A compositionally biased stretch (low complexity) spans glutamate 153 to serine 167. Positions cysteine 189 to leucine 209 are enriched in acidic residues. Residues arginine 259–leucine 274 are compositionally biased toward polar residues.

It belongs to the INSYN1 family.

The protein resides in the postsynaptic density. Functionally, may be a component of the protein machinery at the inhibitory synapses, probably acting as a scaffold. This chain is Inhibitory synaptic factor 1, found in Danio rerio (Zebrafish).